The chain runs to 277 residues: Ras suppressor protein 1 (277 aa).

Residues 1–24 (MSKSLKKLVEESREKNQPEVDMSD) are disordered. S2 is modified (N-acetylserine). Over residues 7–24 (KLVEESREKNQPEVDMSD) the composition is skewed to basic and acidic residues. 7 LRR repeats span residues 41-63 (HITQ…AELK), 64-85 (NLEV…ISSL), 87-109 (KLKH…GSLP), 110-133 (ALEV…FFYL), 135-156 (TLRA…IGKL), 158-179 (KLQI…IGEL), and 181-202 (QLKE…LGNL). Residues 250-277 (MQANPEPPKKNNDKSKKISRKPLAAKNR) form a disordered region. Basic and acidic residues predominate over residues 256 to 265 (PPKKNNDKSK).

In terms of biological role, potentially plays a role in the Ras signal transduction pathway. Capable of suppressing v-Ras transformation in vitro. This chain is Ras suppressor protein 1 (RSU1), found in Homo sapiens (Human).